The sequence spans 539 residues: Alpha-aminoadipic semialdehyde dehydrogenase (539 aa).

A mitochondrion-targeting transit peptide spans 1 to 26 (MWRVPGLLCVRVARKSKFSGSWNRPA). Position 94 is an N6-acetyllysine; alternate (K94). K94 carries the post-translational modification N6-succinyllysine; alternate. NAD(+) contacts are provided by residues 192-194 (TAF), K218, 258-259 (GT), 274-275 (GS), 274-279 (GSTQVG), and 296-297 (EL). E296 functions as the Proton acceptor in the catalytic mechanism. Residue C330 is the Nucleophile of the active site. T331 is a binding site for (S)-2-amino-6-oxohexanoate. E427 contacts NAD(+). K462 is subject to N6-acetyllysine. Positions 489 and 490 each coordinate (S)-2-amino-6-oxohexanoate. Position 500 is an N6-acetyllysine (K500). At K537 the chain carries N6-succinyllysine.

It belongs to the aldehyde dehydrogenase family. As to quaternary structure, homotetramer.

The protein localises to the cytoplasm. The protein resides in the cytosol. It is found in the nucleus. Its subcellular location is the mitochondrion. The enzyme catalyses nonanal + NAD(+) + H2O = nonanoate + NADH + 2 H(+). It carries out the reaction (S)-2-amino-6-oxohexanoate + NAD(+) + H2O = L-2-aminoadipate + NADH + 2 H(+). It catalyses the reaction betaine aldehyde + NAD(+) + H2O = glycine betaine + NADH + 2 H(+). The catalysed reaction is an aldehyde + NAD(+) + H2O = a carboxylate + NADH + 2 H(+). The enzyme catalyses hexanal + NAD(+) + H2O = hexanoate + NADH + 2 H(+). It carries out the reaction octanal + NAD(+) + H2O = octanoate + NADH + 2 H(+). It catalyses the reaction (E)-non-2-enal + NAD(+) + H2O = (E)-non-2-enoate + NADH + 2 H(+). The catalysed reaction is (E)-4-hydroxynon-2-enal + NAD(+) + H2O = (E)-4-hydroxynon-2-enoate + NADH + 2 H(+). It participates in amine and polyamine biosynthesis; betaine biosynthesis via choline pathway; betaine from betaine aldehyde: step 1/1. Multifunctional enzyme mediating important protective effects. Metabolizes betaine aldehyde to betaine, an important cellular osmolyte and methyl donor. Protects cells from oxidative stress by metabolizing a number of lipid peroxidation-derived aldehydes. Involved in lysine catabolism. The protein is Alpha-aminoadipic semialdehyde dehydrogenase (ALDH7A1) of Bos taurus (Bovine).